The primary structure comprises 1538 residues: Arf-GAP with Rho-GAP domain, ANK repeat and PH domain-containing protein 3 (1538 aa).

The SAM domain occupies 4 to 68; that stretch reads PQDLDIAVWL…LRLLRAGSAE (65 aa). Disordered regions lie at residues 72-97, 125-149, and 215-242; these read DSHL…PVPK, SRNS…SVPN, and ASDR…EDAG. Positions 82 to 97 are enriched in pro residues; that stretch reads TPSPAPDAQPPKPVPK. A compositionally biased stretch (basic and acidic residues) spans 216-241; it reads SDRRDGRGVCQERAEHRQDLETREDA. 2 consecutive PH domains span residues 282–374 and 389–478; these read VPLL…SCLK and RPLR…EAVT. The 128-residue stretch at 479–606 folds into the Arf-GAP domain; that stretch reads ETLSDYEVAE…LFRKPHPRHP (128 aa). 2 consecutive PH domains span residues 671-785 and 795-901; these read ATYR…FSPL and LLRM…AGGG. One can recognise a Rho-GAP domain in the interval 903–1084; it reads TGLQEQQMSR…ELIDGYISVF (182 aa). The Ras-associating domain occupies 1113 to 1206; it reads GDLIMEVYIE…ASLLLRKVSM (94 aa). The region spanning 1219-1321 is the PH 5 domain; that stretch reads ESPRVGLLRC…WTTSILKAQH (103 aa). The residue at position 1344 (Thr1344) is a Phosphothreonine. Residues Tyr1399 and Tyr1404 each carry the phosphotyrosine modification. Polar residues predominate over residues 1425–1439; the sequence is WSAKSDPSLTSQRSF. Residues 1425-1538 form a disordered region; that stretch reads WSAKSDPSLT…SNPPSSQPLT (114 aa). Phosphoserine is present on residues Ser1438 and Ser1474. Low complexity-rich tracts occupy residues 1476 to 1486 and 1494 to 1505; these read EEQLLQELNNL and ASCPESSSQPTS. A compositionally biased stretch (pro residues) spans 1506-1529; it reads PQAPSPTSLPTPTPSLPTQPPCTS.

Interacts (via SAM domain) with INPPL1/SHIP2. Tyrosine phosphorylated at a low basal level. PDGF treatment stimulates phosphorylation. Tyrosine phosphorylation is increased in cells that are in the process of becoming attached to a substrate and that start spreading and flattening.

The protein localises to the cytoplasm. Its subcellular location is the cell membrane. It localises to the cytoskeleton. It is found in the cell projection. The protein resides in the lamellipodium. The protein localises to the ruffle. Functionally, phosphatidylinositol 3,4,5-trisphosphate-dependent GTPase-activating protein that modulates actin cytoskeleton remodeling by regulating ARF and RHO family members. Is activated by phosphatidylinositol 3,4,5-trisphosphate (PtdIns(3,4,5)P3) binding. Can be activated by phosphatidylinositol 3,4-bisphosphate (PtdIns(3,4,5)P2) binding, albeit with lower efficiency. Acts preferentially on ARF5 and on RHOA. The polypeptide is Arf-GAP with Rho-GAP domain, ANK repeat and PH domain-containing protein 3 (Arap3) (Mus musculus (Mouse)).